The following is a 66-amino-acid chain: Neurotoxin-like protein STR1 (66 aa).

Residues 2 to 65 (RDGYIVHDGT…VWGEDGFMCW (64 aa)) enclose the LCN-type CS-alpha/beta domain. 4 cysteine pairs are disulfide-bonded: cysteine 13–cysteine 64, cysteine 17–cysteine 40, cysteine 26–cysteine 45, and cysteine 30–cysteine 47.

It belongs to the long (4 C-C) scorpion toxin superfamily. Sodium channel inhibitor family. Beta subfamily. Expressed by the venom gland.

The protein localises to the secreted. Its function is as follows. This protein is not toxic. This Androctonus australis (Sahara scorpion) protein is Neurotoxin-like protein STR1.